A 38-amino-acid chain; its full sequence is Large ribosomal subunit protein bL36 (38 aa).

Belongs to the bacterial ribosomal protein bL36 family.

The protein is Large ribosomal subunit protein bL36 of Saccharophagus degradans (strain 2-40 / ATCC 43961 / DSM 17024).